Reading from the N-terminus, the 256-residue chain is Small ribosomal subunit protein eS1 (256 aa).

Residue A2 is modified to N-acetylalanine; partial.

It belongs to the eukaryotic ribosomal protein eS1 family. Component of the small ribosomal subunit. Mature ribosomes consist of a small (40S) and a large (60S) subunit. The 40S subunit contains about 33 different proteins and 1 molecule of RNA (18S). The 60S subunit contains about 49 different proteins and 3 molecules of RNA (25S, 5.8S and 5S).

The protein localises to the cytoplasm. This is Small ribosomal subunit protein eS1 from Eremothecium gossypii (strain ATCC 10895 / CBS 109.51 / FGSC 9923 / NRRL Y-1056) (Yeast).